The sequence spans 683 residues: MAALLLLPLLLLLPLLLLKLHLWPQLRWLPADLAFAVRALCCKRALRARALAAAAADPEGPEGGCSLAWRLAELAQQRAAHTFLIHGSRRFSYSEAERESNRAARAFLRALGWDWGPDGGDSGEGSAGEGERAAPGAGDAAAGSGAEFAGGDGAARGGGAAAPLSPGATVALLLPAGPEFLWLWFGLAKAGLRTAFVPTALRRGPLLHCLRSCGARALVLAPEFLESLEPDLPALRAMGLHLWAAGPGTHPAGISDLLAEVSAEVDGPVPGYLSSPQSITDTCLYIFTSGTTGLPKAARISHLKILQCQGFYQLCGVHQEDVIYLALPLYHMSGSLLGIVGCMGIGATVVLKSKFSAGQFWEDCQQHRVTVFQYIGELCRYLVNQPPSKAERGHKVRLAVGSGLRPDTWERFVRRFGPLQVLETYGLTEGNVATINYTGQRGAVGRASWLYKHIFPFSLIRYDVTTGEPIRDPQGHCMATSPGEPGLLVAPVSQQSPFLGYAGGPELAQGKLLKDVFRPGDVFFNTGDLLVCDDQGFLRFHDRTGDTFRWKGENVATTEVAEVFEALDFLQEVNVYGVTVPGHEGRAGMAALVLRPPHALDLMQLYTHVSENLPPYARPRFLRLQESLATTETFKQQKVRMANEGFDPSTLSDPLYVLDQAVGAYLPLTTARYSALLAGNLRI.

Residues 3 to 23 (ALLLLPLLLLLPLLLLKLHLW) form a helical membrane-spanning segment. A compositionally biased stretch (gly residues) spans 119–128 (GGDSGEGSAG). The segment at 119 to 145 (GGDSGEGSAGEGERAAPGAGDAAAGSG) is disordered. Residues 133–145 (AAPGAGDAAAGSG) are compositionally biased toward low complexity. ATP contacts are provided by residues 288-292 (TSGTT), histidine 331, threonine 428, aspartate 528, arginine 543, and lysine 635.

The protein belongs to the ATP-dependent AMP-binding enzyme family. Expressed in bronchial and bronchiolar epithelial cells (at protein level).

The protein resides in the mitochondrion membrane. The catalysed reaction is a fatty acid(in) = a fatty acid(out). It carries out the reaction a long-chain fatty acid + ATP + CoA = a long-chain fatty acyl-CoA + AMP + diphosphate. The enzyme catalyses hexadecanoate + ATP + CoA = hexadecanoyl-CoA + AMP + diphosphate. It catalyses the reaction (9Z)-octadecenoate + ATP + CoA = (9Z)-octadecenoyl-CoA + AMP + diphosphate. The catalysed reaction is (9Z,12Z)-octadecadienoate + ATP + CoA = (9Z,12Z)-octadecadienoyl-CoA + AMP + diphosphate. It carries out the reaction (5Z,8Z,11Z,14Z)-eicosatetraenoate + ATP + CoA = (5Z,8Z,11Z,14Z)-eicosatetraenoyl-CoA + AMP + diphosphate. The enzyme catalyses a very long-chain fatty acid + ATP + CoA = a very long-chain fatty acyl-CoA + AMP + diphosphate. It catalyses the reaction tetracosanoate + ATP + CoA = tetracosanoyl-CoA + AMP + diphosphate. Mainly functions as an acyl-CoA ligase catalyzing the ATP-dependent formation of fatty acyl-CoA using LCFA and very-long-chain fatty acids (VLCFA) as substrates. Can mediate the levels of long-chain fatty acids (LCFA) in the cell by facilitating their transport across membranes. This Homo sapiens (Human) protein is Long-chain fatty acid transport protein 3.